The sequence spans 80 residues: Probable small nuclear ribonucleoprotein G (80 aa).

Positions 5 to 76 constitute a Sm domain; that stretch reads GQPPDLKKYM…IVTVEALEPV (72 aa).

Belongs to the snRNP Sm proteins family.

The protein localises to the nucleus. Its function is as follows. Probable common Sm protein, is found in U1 and U2 snRNPs and may be part of the spliceosome. This is Probable small nuclear ribonucleoprotein G from Arabidopsis thaliana (Mouse-ear cress).